The sequence spans 364 residues: Alanine racemase (364 aa).

Residue K39 is the Proton acceptor; specific for D-alanine of the active site. Position 39 is an N6-(pyridoxal phosphate)lysine (K39). R137 lines the substrate pocket. The active-site Proton acceptor; specific for L-alanine is Y258. M306 serves as a coordination point for substrate.

It belongs to the alanine racemase family. Pyridoxal 5'-phosphate serves as cofactor.

It catalyses the reaction L-alanine = D-alanine. It participates in amino-acid biosynthesis; D-alanine biosynthesis; D-alanine from L-alanine: step 1/1. Functionally, catalyzes the interconversion of L-alanine and D-alanine. May also act on other amino acids. The chain is Alanine racemase (alr) from Methylobacterium sp. (strain 4-46).